The following is a 431-amino-acid chain: Aspartokinase (431 aa).

This sequence belongs to the aspartokinase family.

It catalyses the reaction L-aspartate + ATP = 4-phospho-L-aspartate + ADP. Its pathway is amino-acid biosynthesis; L-lysine biosynthesis via DAP pathway; (S)-tetrahydrodipicolinate from L-aspartate: step 1/4. It participates in amino-acid biosynthesis; L-methionine biosynthesis via de novo pathway; L-homoserine from L-aspartate: step 1/3. It functions in the pathway amino-acid biosynthesis; L-threonine biosynthesis; L-threonine from L-aspartate: step 1/5. This Chlamydia trachomatis serovar D (strain ATCC VR-885 / DSM 19411 / UW-3/Cx) protein is Aspartokinase (lysC).